The following is a 253-amino-acid chain: Pimeloyl-[acyl-carrier protein] methyl ester esterase (253 aa).

Residues Trp18, 78-79, and 139-143 each bind substrate; these read SL and FLALD. The Nucleophile role is filled by Ser78. Active-site residues include Asp203 and His231. His231 contacts substrate.

Belongs to the AB hydrolase superfamily. Carboxylesterase BioH family. In terms of assembly, monomer.

It localises to the cytoplasm. It carries out the reaction 6-carboxyhexanoyl-[ACP] methyl ester + H2O = 6-carboxyhexanoyl-[ACP] + methanol + H(+). The protein operates within cofactor biosynthesis; biotin biosynthesis. Its function is as follows. The physiological role of BioH is to remove the methyl group introduced by BioC when the pimeloyl moiety is complete. It allows to synthesize pimeloyl-ACP via the fatty acid synthetic pathway through the hydrolysis of the ester bonds of pimeloyl-ACP esters. The polypeptide is Pimeloyl-[acyl-carrier protein] methyl ester esterase (Xanthomonas oryzae pv. oryzae (strain MAFF 311018)).